The primary structure comprises 239 residues: Probable transcriptional regulatory protein BCAH187_A0615 (239 aa).

This sequence belongs to the TACO1 family. YeeN subfamily.

Its subcellular location is the cytoplasm. The sequence is that of Probable transcriptional regulatory protein BCAH187_A0615 from Bacillus cereus (strain AH187).